We begin with the raw amino-acid sequence, 146 residues long: Prolactin-inducible protein homolog (146 aa).

The first 28 residues, 1–28 (MLTFQFLFRASPATLLLTLYLQLGVITA), serve as a signal peptide directing secretion. The residue at position 29 (glutamine 29) is a Pyrrolidone carboxylic acid. Cystine bridges form between cysteine 65–cysteine 91 and cysteine 89–cysteine 123. N-linked (GlcNAc...) asparagine glycosylation is present at asparagine 105.

The protein belongs to the PIP family. Monomer. Interacts with AZGP1.

The protein resides in the secreted. In Cavia porcellus (Guinea pig), this protein is Prolactin-inducible protein homolog (PIP).